The chain runs to 210 residues: MRCLTMPTLLRALAQAAHTGPPGGRTLHSSAVAATYKYVNMQESKTDMKSVTDRAARTLLWTELFRGLGMTLSYLFREPATINYPFEKGPLSPRFRGEHALRRYPSGEERCIACKLCEAVCPAQAITIEAEPRADGSRRTTRYDIDMTKCIYCGFCQEACPVDAIVEGPNFEFSTETHEELLYNKEKLLNNGDKWEAEIAANIQADYLYR.

The transit peptide at 1 to 34 directs the protein to the mitochondrion; that stretch reads MRCLTMPTLLRALAQAAHTGPPGGRTLHSSAVAA. 4Fe-4S ferredoxin-type domains follow at residues 102 to 131 and 141 to 170; these read RRYP…IEAE and TRYD…EGPN. [4Fe-4S] cluster contacts are provided by Cys-111, Cys-114, Cys-117, Cys-121, Cys-150, Cys-153, Cys-156, and Cys-160.

Belongs to the complex I 23 kDa subunit family. Core subunit of respiratory chain NADH dehydrogenase (Complex I) which is composed of 45 different subunits. This is a component of the iron-sulfur (IP) fragment of the enzyme. Interacts with RAB5IF. [4Fe-4S] cluster is required as a cofactor.

It is found in the mitochondrion inner membrane. It catalyses the reaction a ubiquinone + NADH + 5 H(+)(in) = a ubiquinol + NAD(+) + 4 H(+)(out). Its function is as follows. Core subunit of the mitochondrial membrane respiratory chain NADH dehydrogenase (Complex I) which catalyzes electron transfer from NADH through the respiratory chain, using ubiquinone as an electron acceptor. Essential for the catalytic activity and assembly of complex I. The sequence is that of NADH dehydrogenase [ubiquinone] iron-sulfur protein 8, mitochondrial (NDUFS8) from Macaca fascicularis (Crab-eating macaque).